The following is a 348-amino-acid chain: Dihydroorotase (348 aa).

H17 and H19 together coordinate Zn(2+). Substrate contacts are provided by residues 19-21 (HLR) and N45. Zn(2+) contacts are provided by K103, H140, and H178. Position 103 is an N6-carboxylysine (K103). A substrate-binding site is contributed by H140. L223 contacts substrate. Position 251 (D251) interacts with Zn(2+). D251 is a catalytic residue. H255 and A267 together coordinate substrate.

This sequence belongs to the metallo-dependent hydrolases superfamily. DHOase family. Class II DHOase subfamily. Homodimer. It depends on Zn(2+) as a cofactor.

It carries out the reaction (S)-dihydroorotate + H2O = N-carbamoyl-L-aspartate + H(+). It functions in the pathway pyrimidine metabolism; UMP biosynthesis via de novo pathway; (S)-dihydroorotate from bicarbonate: step 3/3. Its function is as follows. Catalyzes the reversible cyclization of carbamoyl aspartate to dihydroorotate. The sequence is that of Dihydroorotase from Salmonella typhimurium (strain LT2 / SGSC1412 / ATCC 700720).